Here is a 247-residue protein sequence, read N- to C-terminus: Cell division protein ZapD (247 aa).

The protein belongs to the ZapD family. As to quaternary structure, interacts with FtsZ.

It localises to the cytoplasm. Functionally, cell division factor that enhances FtsZ-ring assembly. Directly interacts with FtsZ and promotes bundling of FtsZ protofilaments, with a reduction in FtsZ GTPase activity. In Shigella boydii serotype 18 (strain CDC 3083-94 / BS512), this protein is Cell division protein ZapD.